Here is a 125-residue protein sequence, read N- to C-terminus: Aspartate 1-decarboxylase 2 (125 aa).

Catalysis depends on Ser-25, which acts as the Schiff-base intermediate with substrate; via pyruvic acid. At Ser-25 the chain carries Pyruvic acid (Ser). Thr-57 lines the substrate pocket. The active-site Proton donor is the Tyr-58. 73–75 (GAA) is a binding site for substrate.

The protein belongs to the PanD family. As to quaternary structure, heterooctamer of four alpha and four beta subunits. Pyruvate serves as cofactor. Post-translationally, is synthesized initially as an inactive proenzyme, which is activated by self-cleavage at a specific serine bond to produce a beta-subunit with a hydroxyl group at its C-terminus and an alpha-subunit with a pyruvoyl group at its N-terminus.

The protein localises to the cytoplasm. It catalyses the reaction L-aspartate + H(+) = beta-alanine + CO2. Its pathway is cofactor biosynthesis; (R)-pantothenate biosynthesis; beta-alanine from L-aspartate: step 1/1. Catalyzes the pyruvoyl-dependent decarboxylation of aspartate to produce beta-alanine. The polypeptide is Aspartate 1-decarboxylase 2 (Gloeobacter violaceus (strain ATCC 29082 / PCC 7421)).